A 672-amino-acid polypeptide reads, in one-letter code: Nuclear RNA export factor 1 (672 aa).

2 disordered regions span residues methionine 1–proline 52 and aspartate 73–glycine 101. The segment covering arginine 40–serine 49 has biased composition (basic residues). The region spanning tryptophan 113–valine 193 is the RRM domain. 4 LRR repeats span residues aspartate 255 to proline 280, asparagine 281 to leucine 304, serine 305 to arginine 332, and lysine 333 to leucine 360. An NTF2 domain is found at valine 375–isoleucine 529. The segment at lysine 541–alanine 564 is disordered. Residues proline 553 to glutamine 563 show a composition bias toward polar residues. The residue at position 561 (serine 561) is a Phosphoserine. Positions serine 618–lysine 672 constitute a TAP-C domain.

It belongs to the NXF family. In terms of assembly, interacts with Nxt1. Interacts with ZC3H3. Forms a complex with Nup358/RanBP2, RanGAP and Nxt1. Interacts with Nup54 and Nup58. Interacts with Orc3 and Hpr1. Expressed ubiquitously.

It localises to the nucleus. Its subcellular location is the nucleoplasm. It is found in the cytoplasm. The protein localises to the nucleus envelope. Mediates the export of the majority of mRNAs from the nucleus to the cytoplasm. In ovarian follicle cells, plays a role in transposable element silencing regulation by enabling the nuclear export of flamenco (flam) transcripts and subsequent piRNA biogenesis. In Drosophila melanogaster (Fruit fly), this protein is Nuclear RNA export factor 1.